Consider the following 20-residue polypeptide: Sperm acrosome membrane-associated protein 3, processed form (20 aa).

This sequence belongs to the glycosyl hydrolase 22 family.

Its function is as follows. Sperm surface membrane protein that may be involved in sperm-egg plasma membrane adhesion and fusion during fertilization. It could be a potential receptor for the egg oligosaccharide residue N-acetylglucosamine, which is present in the extracellular matrix over the egg plasma membrane. In Vulpes vulpes (Red fox), this protein is Sperm acrosome membrane-associated protein 3, processed form (SPACA3).